The sequence spans 234 residues: MNMNADPAELQKFSELAHRWWDTTSEFKPLHEINPLRLDWIDRNAGLAGKRVLDIGCGGGILSESMAAAGAHVTGIDLSEKALGVARLHLFESGQKVDYHHASAEEFAAQHAGEFDIVTCMEMLEHVPDPASTVAACAQLVRPGGQVFFSTINRNFKAYLFAVLGAEYILKLLPRGTHDYVKFIRPSELARYCRQAGLETAELLGMSYNPLTQVYSLGNDTDVNYLVHAKQAVS.

Residues Arg-37, Gly-56, Asp-77, and Met-121 each coordinate S-adenosyl-L-methionine.

It belongs to the methyltransferase superfamily. UbiG/COQ3 family.

It carries out the reaction a 3-demethylubiquinol + S-adenosyl-L-methionine = a ubiquinol + S-adenosyl-L-homocysteine + H(+). The catalysed reaction is a 3-(all-trans-polyprenyl)benzene-1,2-diol + S-adenosyl-L-methionine = a 2-methoxy-6-(all-trans-polyprenyl)phenol + S-adenosyl-L-homocysteine + H(+). The protein operates within cofactor biosynthesis; ubiquinone biosynthesis. O-methyltransferase that catalyzes the 2 O-methylation steps in the ubiquinone biosynthetic pathway. This is Ubiquinone biosynthesis O-methyltransferase from Aromatoleum aromaticum (strain DSM 19018 / LMG 30748 / EbN1) (Azoarcus sp. (strain EbN1)).